A 584-amino-acid polypeptide reads, in one-letter code: Pentalenolactone D synthase (584 aa).

FAD-binding positions include 55 to 56 (IG), 77 to 78 (DG), 85 to 86 (TW), 97 to 98 (DV), Y103, V147, and M486.

The protein belongs to the FAD-binding monooxygenase family. Requires FAD as cofactor.

The enzyme catalyses 1-deoxy-11-oxopentalenate + NADPH + O2 + H(+) = pentalenolactone D + NADP(+) + H2O. The protein operates within antibiotic biosynthesis; pentalenolactone biosynthesis. Catalyzes the flavin-dependent Baeyer-Villiger oxidation of 1-deoxy-11-oxopentalenic acid to pentalenolactone D in the biosynthesis of pentalenolactone antibiotic. The polypeptide is Pentalenolactone D synthase (penE) (Streptomyces exfoliatus (Streptomyces hydrogenans)).